Here is a 412-residue protein sequence, read N- to C-terminus: Glutamyl-tRNA reductase (412 aa).

Residues 52-55 (TCNR), S108, 113-115 (EYE), and Q119 each bind substrate. The Nucleophile role is filled by C53. 189–194 (GAGEIG) contributes to the NADP(+) binding site.

It belongs to the glutamyl-tRNA reductase family. In terms of assembly, homodimer.

It carries out the reaction (S)-4-amino-5-oxopentanoate + tRNA(Glu) + NADP(+) = L-glutamyl-tRNA(Glu) + NADPH + H(+). The protein operates within porphyrin-containing compound metabolism; protoporphyrin-IX biosynthesis; 5-aminolevulinate from L-glutamyl-tRNA(Glu): step 1/2. Functionally, catalyzes the NADPH-dependent reduction of glutamyl-tRNA(Glu) to glutamate 1-semialdehyde (GSA). The protein is Glutamyl-tRNA reductase of Sulfurisphaera tokodaii (strain DSM 16993 / JCM 10545 / NBRC 100140 / 7) (Sulfolobus tokodaii).